The primary structure comprises 131 residues: Large ribosomal subunit protein bL17 (131 aa).

It belongs to the bacterial ribosomal protein bL17 family. In terms of assembly, part of the 50S ribosomal subunit. Contacts protein L32.

The protein is Large ribosomal subunit protein bL17 of Methylobacillus flagellatus (strain ATCC 51484 / DSM 6875 / VKM B-1610 / KT).